We begin with the raw amino-acid sequence, 85 residues long: RNA-binding protein Hfq (85 aa).

In terms of domain architecture, Sm spans 10-69 (DPFLNILRKEHVPVSIYLVNGIKLQGQIESFDQYVVLLKNTVTQMVYKHAISTVVPARPV).

Belongs to the Hfq family. As to quaternary structure, homohexamer.

Its function is as follows. RNA chaperone that binds small regulatory RNA (sRNAs) and mRNAs to facilitate mRNA translational regulation in response to envelope stress, environmental stress and changes in metabolite concentrations. Also binds with high specificity to tRNAs. The polypeptide is RNA-binding protein Hfq (Laribacter hongkongensis (strain HLHK9)).